Here is a 916-residue protein sequence, read N- to C-terminus: Translation initiation factor IF-2 (916 aa).

Residues 58-317 (LEAEGHLPGA…GVTVPRGDGG (260 aa)) form a disordered region. Positions 120–142 (EKVAASEAADAKPAAGAPADTAK) are enriched in low complexity. Positions 195–206 (SNIPRPAPPRPG) are enriched in pro residues. 2 stretches are compositionally biased toward gly residues: residues 214 to 227 (RPGG…GGRP) and 235 to 282 (SAGG…GRGG). The segment covering 283–294 (GKSKARKSKRAK) has biased composition (basic residues). Residues 409–583 (IRPPVVTVMG…LTADAGLDLR (175 aa)) form the tr-type G domain. The interval 418–425 (GHVDHGKT) is G1. 418–425 (GHVDHGKT) lines the GTP pocket. The tract at residues 443–447 (GITQH) is G2. Residues 468–471 (DTPG) form a G3 region. Residues 468-472 (DTPGH) and 522-525 (NKVD) contribute to the GTP site. A G4 region spans residues 522 to 525 (NKVD). Positions 558 to 560 (SAR) are G5.

The protein belongs to the TRAFAC class translation factor GTPase superfamily. Classic translation factor GTPase family. IF-2 subfamily.

The protein localises to the cytoplasm. Functionally, one of the essential components for the initiation of protein synthesis. Protects formylmethionyl-tRNA from spontaneous hydrolysis and promotes its binding to the 30S ribosomal subunits. Also involved in the hydrolysis of GTP during the formation of the 70S ribosomal complex. The sequence is that of Translation initiation factor IF-2 from Leifsonia xyli subsp. xyli (strain CTCB07).